Consider the following 105-residue polypeptide: ATP-dependent Clp protease adapter protein ClpS (105 aa).

Belongs to the ClpS family. As to quaternary structure, binds to the N-terminal domain of the chaperone ClpA.

In terms of biological role, involved in the modulation of the specificity of the ClpAP-mediated ATP-dependent protein degradation. The sequence is that of ATP-dependent Clp protease adapter protein ClpS from Klebsiella pneumoniae (strain 342).